The primary structure comprises 321 residues: tRNA(Ile)-lysidine synthase (321 aa).

Residue 30-35 participates in ATP binding; sequence SGGSDS.

Belongs to the tRNA(Ile)-lysidine synthase family.

Its subcellular location is the cytoplasm. It catalyses the reaction cytidine(34) in tRNA(Ile2) + L-lysine + ATP = lysidine(34) in tRNA(Ile2) + AMP + diphosphate + H(+). In terms of biological role, ligates lysine onto the cytidine present at position 34 of the AUA codon-specific tRNA(Ile) that contains the anticodon CAU, in an ATP-dependent manner. Cytidine is converted to lysidine, thus changing the amino acid specificity of the tRNA from methionine to isoleucine. The chain is tRNA(Ile)-lysidine synthase from Chlamydia trachomatis serovar D (strain ATCC VR-885 / DSM 19411 / UW-3/Cx).